We begin with the raw amino-acid sequence, 605 residues long: IQ domain-containing protein IQM2 (605 aa).

Residues 105-134 (KHEAAIKLQKVYKSFRTRRKLADCAVLVEQ) enclose the IQ domain. Residues 408 to 505 (QDKVDPSGEE…EEGETKESEV (98 aa)) form a disordered region. The segment covering 425 to 440 (SISRKQSDLETPEKME) has biased composition (basic and acidic residues). Positions 462–480 (DYDSGDDEEEEEEMFELEQ) are enriched in acidic residues. The span at 481–490 (ESMPSEQSSP) shows a compositional bias: low complexity. Positions 491–505 (RGEEKEEGETKESEV) are enriched in basic and acidic residues.

Expressed in rosette and cauline leaves, stems, flowers and siliques, and at lower levels in roots.

It is found in the cytoplasm. Its subcellular location is the nucleus. In terms of biological role, may be involved in biotic and abiotic stress responses. The protein is IQ domain-containing protein IQM2 of Arabidopsis thaliana (Mouse-ear cress).